We begin with the raw amino-acid sequence, 84 residues long: U8-theraphotoxin-Hhn1c 2 (84 aa).

A signal peptide spans 1–21 (MKVVLLVCLVWMMAMMELVSC). 5 disulfide bridges follow: Cys-23/Cys-35, Cys-29/Cys-44, Cys-34/Cys-67, Cys-54/Cys-75, and Cys-69/Cys-81.

Belongs to the AVIT (prokineticin) family. As to expression, expressed by the venom gland.

It is found in the secreted. This chain is U8-theraphotoxin-Hhn1c 2, found in Cyriopagopus hainanus (Chinese bird spider).